Consider the following 198-residue polypeptide: Probable nicotinate-nucleotide adenylyltransferase (198 aa).

This sequence belongs to the NadD family.

It catalyses the reaction nicotinate beta-D-ribonucleotide + ATP + H(+) = deamido-NAD(+) + diphosphate. The protein operates within cofactor biosynthesis; NAD(+) biosynthesis; deamido-NAD(+) from nicotinate D-ribonucleotide: step 1/1. Its function is as follows. Catalyzes the reversible adenylation of nicotinate mononucleotide (NaMN) to nicotinic acid adenine dinucleotide (NaAD). The chain is Probable nicotinate-nucleotide adenylyltransferase from Albidiferax ferrireducens (strain ATCC BAA-621 / DSM 15236 / T118) (Rhodoferax ferrireducens).